The sequence spans 752 residues: Primary amine oxidase (752 aa).

Positions 1–27 (MAILSPRKTALALAVALSCAWQSPAFA) are cleaved as a signal peptide. Residues 408–419 (YLDSGDYGMGTL) and 490–495 (VGNYDY) each bind substrate. D410 functions as the Proton acceptor in the catalytic mechanism. Y493 (schiff-base intermediate with substrate; via topaquinone) is an active-site residue. Y493 carries the 2',4',5'-topaquinone modification. H551 and H553 together coordinate Cu cation. Residues D560, L561, D562, E600, Y694, D697, E699, and D705 each contribute to the Ca(2+) site. A Mn(2+)-binding site is contributed by D560. D562 is a Mn(2+) binding site. D705 is a binding site for Mn(2+). Residue H716 coordinates Cu cation.

It belongs to the copper/topaquinone oxidase family. Homodimer. Cu cation serves as cofactor. Requires Ca(2+) as cofactor. The cofactor is L-topaquinone. It depends on Mn(2+) as a cofactor. Post-translationally, topaquinone (TPQ) is generated by copper-dependent autoxidation of a specific tyrosyl residue.

It localises to the periplasm. The enzyme catalyses a primary methyl amine + O2 + H2O = an aldehyde + H2O2 + NH4(+). Active on tyramine, tryptamine, beta-phenethylamine and dopamine. This Klebsiella michiganensis (strain ATCC 8724 / DSM 4798 / JCM 20051 / NBRC 3318 / NRRL B-199 / KCTC 1686 / BUCSAV 143 / CCM 1901) protein is Primary amine oxidase (maoA).